The chain runs to 181 residues: Probable toxin TacT (181 aa).

The protein belongs to the acetyltransferase family. In terms of assembly, forms a complex with cognate antitoxin TacA.

In terms of biological role, probable toxin component of a type II toxin-antitoxin (TA) system. Might acetylate tRNA and inhibit translation. Should be neutralized by cognate antitoxin TacA (y4aR). The sequence is that of Probable toxin TacT from Sinorhizobium fredii (strain NBRC 101917 / NGR234).